The chain runs to 223 residues: FAD-dependent monooxygenase imqC (223 aa).

FAD-binding positions include 139–141 (RFY), Y189, and D210.

It belongs to the PheA/TfdB FAD monooxygenase family.

It participates in secondary metabolite biosynthesis. In terms of biological role, FAD-dependent monooxygenase; part of the gene cluster that mediates the biosynthesis of imizoquins A to D, tripeptide-derived alkaloids that serve a protective role against oxidative stress that are essential for normal germination. ImqB is a canonical three-module NRPS that assembles the tripeptide backbone of the imizoquins via condensation of Trp, Tyr, and Leu-derived precursors. N-methylation by imqF and phenol oxidation by imqC, followed by cyclization via the FAD-dependent oxidase imqH carry out the three-step transformation of L-tyrosine into tetrahydroisoquinoline. Importantly, this sequence requires the presence of a free amine in the tyrosine moiety, indicating that isoquinoline formation occurs prior to peptide bond formation. The imidazolidin-4-one ring of imizoquins could form following additional oxidation of the methyl-derived bridgehead carbon by imqH. Lastly, O-methylation by imqG and leucine hydroxylation by imqE complete biosynthesis of the imizoquins. In Aspergillus flavus (strain ATCC 200026 / FGSC A1120 / IAM 13836 / NRRL 3357 / JCM 12722 / SRRC 167), this protein is FAD-dependent monooxygenase imqC.